An 87-amino-acid polypeptide reads, in one-letter code: Mitochondrial import inner membrane translocase subunit TIM9 (87 aa).

The short motif at 35-59 is the Twin CX3C motif element; that stretch reads CFSDCVNDFTSSKLTSKEQTCIMRC. Disulfide bonds link Cys35-Cys59 and Cys39-Cys55.

It belongs to the small Tim family. In terms of assembly, heterohexamer; composed of 3 copies of TIM9 and 3 copies of TIM10, named soluble 70 kDa complex. Associates with the TIM22 complex, whose core is composed of TIM22 and TIM54. Interacts with the transmembrane regions of multi-pass transmembrane proteins in transit.

Its subcellular location is the mitochondrion inner membrane. Mitochondrial intermembrane chaperone that participates in the import and insertion of multi-pass transmembrane proteins into the mitochondrial inner membrane. Also required for the transfer of beta-barrel precursors from the TOM complex to the sorting and assembly machinery (SAM complex) of the outer membrane. Acts as a chaperone-like protein that protects the hydrophobic precursors from aggregation and guide them through the mitochondrial intermembrane space. The polypeptide is Mitochondrial import inner membrane translocase subunit TIM9 (TIM9) (Eremothecium gossypii (strain ATCC 10895 / CBS 109.51 / FGSC 9923 / NRRL Y-1056) (Yeast)).